A 175-amino-acid chain; its full sequence is MMLPMTLCRMSWMLLSCLMFLSWVEGEESQKKLPSSRITCPQGSVAYGSYCYSLILIPQTWSNAELSCQMHFSGHLAFLLSTGEITFVSSLVKNSLTAYQYIWIGLHDPSHGTLPNGSGWKWSSSNVLTFYNWERNPSIAADRGYCAVLSQKSGFQKWRDFNCENELPYICKFKV.

An N-terminal signal peptide occupies residues M1–G26. A C-type lectin domain is found at I38–V175. Cystine bridges form between C40/C51, C68/C171, and C146/C163.

As to expression, expressed only in CW animals pancreas and to a lesser extent in duodenum. In pancreas it is found in acinar cells, but not in islets.

It is found in the secreted. Functionally, constituent of ilotropin, which is a partially purified preparation of cellophane wrapping (CW) pancreata. Capable of initiating duct cell proliferation, a prerequisite for islet neogenesis. This Mesocricetus auratus (Golden hamster) protein is Pancreatic beta cell growth factor (INGAP).